A 518-amino-acid polypeptide reads, in one-letter code: E3 ubiquitin-protein ligase TRIM39 (518 aa).

Residues 29–70 (CSVCLEYLKEPVIIECGHNFCKACITRWWEDLERDFPCPVCR) form an RING-type zinc finger. The B box-type zinc-finger motif lies at 102 to 143 (RDESLCPQHHEALSLFCYEDQEAVCLICAISHTHRAHTVVPL). Cys-107, His-110, Cys-129, and His-135 together coordinate Zn(2+). Residues 181-250 (ELKRLVESRR…AHLAAEVEGK (70 aa)) are a coiled coil. Interaction with CDKN1A stretches follow at residues 268–337 (KNIP…QLIA) and 389–518 (TSGR…TDWE). The 196-residue stretch at 319-514 (SNFPRQYFAL…NAAPLTIRPP (196 aa)) folds into the B30.2/SPRY domain.

Belongs to the TRIM/RBCC family. As to quaternary structure, interacts with MOAP1. Interacts with CDKN1A. Post-translationally, autoubiquitinated.

The protein resides in the cytoplasm. The protein localises to the cytosol. It is found in the mitochondrion. Its subcellular location is the nucleus. It catalyses the reaction S-ubiquitinyl-[E2 ubiquitin-conjugating enzyme]-L-cysteine + [acceptor protein]-L-lysine = [E2 ubiquitin-conjugating enzyme]-L-cysteine + N(6)-ubiquitinyl-[acceptor protein]-L-lysine.. It participates in protein modification; protein ubiquitination. Functionally, E3 ubiquitin-protein ligase. May facilitate apoptosis by inhibiting APC/C-Cdh1-mediated poly-ubiquitination and subsequent proteasome-mediated degradation of the pro-apoptotic protein MOAP1. Regulates the G1/S transition of the cell cycle and DNA damage-induced G2 arrest by stabilizing CDKN1A/p21. Positively regulates CDKN1A/p21 stability by competing with DTL for CDKN1A/p21 binding, therefore disrupting DCX(DTL) E3 ubiquitin ligase complex-mediated CDKN1A/p21 ubiquitination and degradation. This is E3 ubiquitin-protein ligase TRIM39 (TRIM39) from Pan troglodytes (Chimpanzee).